The chain runs to 1478 residues: MPFEQTQLFCDEKQTILKKIDTRNEIPDTIKSIPIPKISEAGFHYEPKNVNICLPKINIPNEILMKHEVEKYRKLFQSKPQTARKSVSVRTVSCAKGCAQRCESERAEDEAGKMCAKILNFTCSKCQDRTQYSPNDLQKHFEMWHHGELPSFPCEMCSFSASDFQIFKQHRKTHRNTFVKCDICNSERSYTLLDLTKHFTSKHCVNGNFQCEECRFFTQDVGTFVQHIHRHKEVHYKCGKCHHLCFTKGELQKHLRVHSGTLPFTCHYCSYGAIHKDQLVRHVITLHKEHLYAKEKLERDQYDKRVAKTTTGLKLILKRYKIGPTKTFWKRKTIASGNDESIGKNAQAFNIVSKTQTKSEDQSQEQLNEEKGGRQHCEDGDKPIESGSEKATVLSTGQCNKADEGASAPSSVLSAVQGPTVLLVRNNKITIPANYSAKFMGFKMVDGRQHIVIKLLPANKQILPSPALQPNTEKESTANLPPQAMDNTGFATGLTAMNDTDFVKAAPLSCSSPELPRKVISEKETAFISEKNNMLQMVDDSKSVTSLPTPSESVTSVRLTTKVEARDNVDLWENPSTQSHPDLIGTSINSPDKVNLTIRPNAYSCGDMHNYCINYVNSELPAESSNCFEFSNQGSLPFHNYSKVNNKRRRFSRGAVCENLQRESSNKTVTQQSTSDSDTTSPLRKESSNSDSLLASISPLSGTLKIKTEIEEPCDLEETQNFNEQSLFTNENQNLLNMTEEPKWDDIPCAGSPMMPRITSVFSLQSEQASEFLPPEVNQLLQDTLKPRSDIKEDSNNIPSKNLPLDCDQTLKKSKEEVIKSSKDFQMQDIISVPSASVGVNVPANDLNLKCNGQEKQALSVLQDVRDPGVTTKIPSIITLLKTQSDAIITQQLVKDKLRTTTQHSGPVYVQNPLLTSEQKNPVFVQTPKGFIIPLHVANKPGLHVFSGRPVPLVNTQSVPAALLVNKKPGVVLTVNNGKPEGVPTVKTENVHSYGTVTKEPCRTPFLKAEHNRYCLTPGLCSSIGSCVNMKTCSENTLPLKGSYIIKTSVSSSVKAVPFANVLPEQQGPNVNVLDAVKQQNESLPKASLYTLMPDGKQAVFFKCMMPNNTKLLKPRLVQNSTYQRIQPKRPAGAPQKILLKIFNPVLSMSAVNNLSVGNSASSFQKEIVPSKPTVHGEQKVPQSSRDALPVSVQDLMPANEAVLSSTAACPGSSEEPVHISERSETRVSRSKANCTIERNFNKRKTCKNKFAKIKTRISQDSETAFVSRNRSCKRKYIDNYQEPPRKKSATHRKCKERANAEDVQETFGFSRPRLPKDSGRTLRLFPFNSEQLVKCPRRNQPVVVLNHPDADAPEVERVMKTITKFNGRVLKVSLSKATINALLKPVSITSETTYSDFSKRHKMLKPVNSVKERFVLKLTLKKTSKNNYQIVKTTSEDVLKSKFNCWFCGRVFDNQDVWAGHGQRHLVEATKDWNMLE.

4 C2H2-type zinc fingers span residues 152 to 174 (FPCEMCSFSASDFQIFKQHRKTH), 209 to 231 (FQCEECRFFTQDVGTFVQHIHRH), 236 to 258 (YKCGKCHHLCFTKGELQKHLRVH), and 264 to 287 (FTCHYCSYGAIHKDQLVRHVITLH). Residues 355-394 (TQTKSEDQSQEQLNEEKGGRQHCEDGDKPIESGSEKATVL) are disordered. Residue K358 forms a Glycyl lysine isopeptide (Lys-Gly) (interchain with G-Cter in SUMO2) linkage. Positions 368-388 (NEEKGGRQHCEDGDKPIESGS) are enriched in basic and acidic residues. Glycyl lysine isopeptide (Lys-Gly) (interchain with G-Cter in SUMO2) cross-links involve residues K390 and K428. Residues 464–484 (PSPALQPNTEKESTANLPPQA) form a disordered region. K518 is covalently cross-linked (Glycyl lysine isopeptide (Lys-Gly) (interchain with G-Cter in SUMO2)). S652 carries the phosphoserine modification. A disordered region spans residues 656–694 (VCENLQRESSNKTVTQQSTSDSDTTSPLRKESSNSDSLL). Residues 670–681 (TQQSTSDSDTTS) are compositionally biased toward low complexity. Glycyl lysine isopeptide (Lys-Gly) (interchain with G-Cter in SUMO2) cross-links involve residues K707, K792, K882, K895, K987, K1008, K1041, K1055, K1078, K1180, and K1441. Residues 1444–1466 (FNCWFCGRVFDNQDVWAGHGQRH) form a C2H2-type 5 zinc finger.

Belongs to the krueppel C2H2-type zinc-finger protein family.

Its subcellular location is the nucleus. Functionally, through its association with the EHMT1-EHMT2/G9A and PRC2/EED-EZH2 histone methyltransferase complexes may function in gene silencing, regulating repressive post-translational methylation of histone tails at promoters of target genes. This chain is Zinc finger protein 518A (Znf518a), found in Rattus norvegicus (Rat).